A 371-amino-acid polypeptide reads, in one-letter code: Fe(3+) ions import ATP-binding protein FbpC (371 aa).

The ABC transporter domain maps to 5-235 (IKIENAQKRY…PANLFVATFI (231 aa)). 37 to 44 (GPSGCGKT) contacts ATP.

The protein belongs to the ABC transporter superfamily. Fe(3+) ion importer (TC 3.A.1.10) family. As to quaternary structure, the complex is composed of two ATP-binding proteins (FbpC), two transmembrane proteins (FbpB) and a solute-binding protein (FbpA).

Its subcellular location is the cell inner membrane. It catalyses the reaction Fe(3+)(out) + ATP + H2O = Fe(3+)(in) + ADP + phosphate + H(+). Functionally, part of the ABC transporter complex FbpABC involved in Fe(3+) ions import. Responsible for energy coupling to the transport system. The polypeptide is Fe(3+) ions import ATP-binding protein FbpC (Fusobacterium nucleatum subsp. nucleatum (strain ATCC 25586 / DSM 15643 / BCRC 10681 / CIP 101130 / JCM 8532 / KCTC 2640 / LMG 13131 / VPI 4355)).